The primary structure comprises 202 residues: Imidazoleglycerol-phosphate dehydratase (202 aa).

Belongs to the imidazoleglycerol-phosphate dehydratase family.

Its subcellular location is the cytoplasm. It catalyses the reaction D-erythro-1-(imidazol-4-yl)glycerol 3-phosphate = 3-(imidazol-4-yl)-2-oxopropyl phosphate + H2O. It participates in amino-acid biosynthesis; L-histidine biosynthesis; L-histidine from 5-phospho-alpha-D-ribose 1-diphosphate: step 6/9. This Salinibacter ruber (strain DSM 13855 / M31) protein is Imidazoleglycerol-phosphate dehydratase.